Reading from the N-terminus, the 595-residue chain is Putative histone-lysine N-methyltransferase PRDM6 (595 aa).

Residues 27–90 form a disordered region; sequence FPHGGAGPLK…STPASSSTSA (64 aa). A compositionally biased stretch (gly residues) spans 30-40; that stretch reads GGAGPLKGSGA. Over residues 49–59 the composition is skewed to pro residues; sequence PLQPPPPPPPP. Low complexity predominate over residues 71 to 90; sequence PRPASLSSASSTPASSSTSA. In terms of domain architecture, SET spans 246-365; that stretch reads REVCLCTSTV…RGTELLVWYN (120 aa). The C2H2-type 1; degenerate zinc finger occupies 473 to 495; sequence WKCGQCFKTFTQRILLQMHVCTQ. 2 C2H2-type zinc fingers span residues 501–523 and 529–551; these read YQCG…VVTH and FKCG…IRTH. A C2H2-type 4; degenerate zinc finger spans residues 557–579; it reads FKCERCERSFTQATQLSRHQRMP.

Belongs to the class V-like SAM-binding methyltransferase superfamily. As to quaternary structure, interacts with HDAC1, HDAC2, HDAC3, CBX1 and EP300.

Its subcellular location is the nucleus. It carries out the reaction L-lysyl(20)-[histone H4] + S-adenosyl-L-methionine = N(6)-methyl-L-lysyl(20)-[histone H4] + S-adenosyl-L-homocysteine + H(+). Putative histone methyltransferase that acts as a transcriptional repressor of smooth muscle gene expression. Promotes the transition from differentiated to proliferative smooth muscle by suppressing differentiation and maintaining the proliferative potential of vascular smooth muscle cells. Also plays a role in endothelial cells by inhibiting endothelial cell proliferation, survival and differentiation. It is unclear whether it has histone methyltransferase activity in vivo. According to some authors, it does not act as a histone methyltransferase by itself and represses transcription by recruiting EHMT2/G9a. According to others, it possesses histone methyltransferase activity when associated with other proteins and specifically methylates 'Lys-20' of histone H4 in vitro. 'Lys-20' methylation represents a specific tag for epigenetic transcriptional repression. The sequence is that of Putative histone-lysine N-methyltransferase PRDM6 (PRDM6) from Homo sapiens (Human).